A 466-amino-acid polypeptide reads, in one-letter code: Voltage-gated potassium channel regulatory subunit KCNG2 (466 aa).

The Cytoplasmic portion of the chain corresponds to 1–174 (MEPWPCSPGG…DVVDNPHSGL (174 aa)). A disordered region spans residues 131–155 (AEARAGPTERGAQGSPARALGPRGR). A helical transmembrane segment spans residues 175 to 196 (AGKLFACVSVSFVAVTAVGLCL). Topologically, residues 197-217 (STMPDIRAEEERGECSPKCRS) are extracellular. Residues 218 to 239 (LFVLETVCVAWFSFEFLLRSLQ) form a helical membrane-spanning segment. The Cytoplasmic portion of the chain corresponds to 240–250 (AESKCAFLRAP). Residues 251-271 (LNIIDILALLPFYVSLLLGLA) traverse the membrane as a helical segment. Over 272–283 (AGPGGTKLLERA) the chain is Extracellular. Residues 284–304 (GLVLRLLRALRVLYVMRLARH) form a helical; Voltage-sensor membrane-spanning segment. The Cytoplasmic portion of the chain corresponds to 305–319 (SLGLRSLGLTMRRCA). The helical transmembrane segment at 320–341 (REFGLLLLFLCVAMALFAPLVH) threads the bilayer. Over 342 to 356 (LAERELGARRDFSSV) the chain is Extracellular. An intramembrane region (helical) is located at residues 357-368 (PASYWWAVISMT). Positions 369-374 (TVGYGD) match the Selectivity filter motif. An intramembrane segment occupies 369-376 (TVGYGDMV). Over 377–383 (PRSLPGQ) the chain is Extracellular. The helical transmembrane segment at 384-412 (VVALSSILSGILLMAFPVTSIFHTFSRSY) threads the bilayer. Residues 413–466 (SELKEQQQRAASPEPALQEDSTHSATATEDSSQGPDSAGLADDSADALWVRAGR) lie on the Cytoplasmic side of the membrane. Residues 416-466 (KEQQQRAASPEPALQEDSTHSATATEDSSQGPDSAGLADDSADALWVRAGR) form a disordered region. Over residues 435-447 (HSATATEDSSQGP) the composition is skewed to polar residues. Residues 448–460 (DSAGLADDSADAL) are compositionally biased toward low complexity.

Belongs to the potassium channel family. G (TC 1.A.1.2) subfamily. Kv6.2/KCNG2 sub-subfamily. Heterodimer with KCNB1. In terms of tissue distribution, highly expressed in heart, liver, skeletal muscle, kidney and pancreas. Detected at low levels in brain, lung and placenta.

The protein localises to the cell membrane. Regulatory alpha-subunit of the voltage-gated potassium (Kv) channel which, when coassembled with KCNB1, can modulate the kinetics and conductance-voltage relationship. Modulates channel activity by shifting the threshold and the half-maximal activation to more negative values. Potassium channel subunit that does not form functional channels by itself. This is Voltage-gated potassium channel regulatory subunit KCNG2 from Homo sapiens (Human).